A 169-amino-acid polypeptide reads, in one-letter code: MWIIILIVIIVIITIIFSKRDVVSQSSLDIQRYMGTWYEIARLPTSFQKGCVNSTANYQLLEPNKIQVTNNCEINGRINSVTGTAIPAANTRIVSGFLTPASLMVNFGYGFSPYNVIFIDENYQYAIVSGGNDTLWILSRFKNINQSTYNQLVTIVYNQGYDVNNLIRN.

An N-terminal signal peptide occupies residues 1 to 18 (MWIIILIVIIVIITIIFS).

This sequence belongs to the calycin superfamily. Lipocalin family.

Its subcellular location is the secreted. The protein resides in the virion. Functionally, could play a role in the transport of a small ligand. The chain is Putative lipocalin R877 from Acanthamoeba polyphaga mimivirus (APMV).